A 400-amino-acid chain; its full sequence is Acetate kinase (400 aa).

Asparagine 9 contributes to the Mg(2+) binding site. Lysine 16 is a binding site for ATP. Residue arginine 90 coordinates substrate. Aspartate 147 serves as the catalytic Proton donor/acceptor. ATP contacts are provided by residues 207 to 211 (HIGNG), 282 to 284 (DLR), and 330 to 334 (GIGEN). Glutamate 385 provides a ligand contact to Mg(2+).

Belongs to the acetokinase family. In terms of assembly, homodimer. Requires Mg(2+) as cofactor. The cofactor is Mn(2+).

Its subcellular location is the cytoplasm. It catalyses the reaction acetate + ATP = acetyl phosphate + ADP. It functions in the pathway metabolic intermediate biosynthesis; acetyl-CoA biosynthesis; acetyl-CoA from acetate: step 1/2. Functionally, catalyzes the formation of acetyl phosphate from acetate and ATP. Can also catalyze the reverse reaction. This is Acetate kinase from Staphylococcus aureus (strain Mu3 / ATCC 700698).